A 250-amino-acid polypeptide reads, in one-letter code: uncharacterized protein (250 aa).

This is an uncharacterized protein from Mycobacterium tuberculosis (strain CDC 1551 / Oshkosh).